Consider the following 519-residue polypeptide: Cytochrome P450 709B1 (519 aa).

Residues 1–21 form a helical membrane-spanning segment; the sequence is MGLVIFLALIVLILIIGLRIF. Cys-464 provides a ligand contact to heme.

The protein belongs to the cytochrome P450 family. The cofactor is heme. In terms of tissue distribution, highly expressed in siliques.

It is found in the membrane. Involved in stress response. Does not function as cytokinin hydroxylase in yeast heterologous system. This is Cytochrome P450 709B1 from Arabidopsis thaliana (Mouse-ear cress).